A 299-amino-acid chain; its full sequence is MRIIVLGSAAGGGHPQWNCHTPASLRAWQQADGAQRRTQASIAVSADGERWVLINASPDFRQQILATPALWPQQGLRHSPIKAVLLTSGEIDHIAGLLSMRESQPFALHASRRVLDLLAQNPIFDAVNPQYVSRQPFTLNAPLTVSGLQLTPFSVPGKVPLFMESRSGGDLAGSQEETLGLTIDDSQHRVHYIPGCAAMTDALRARLHGAELVFFDGTLWRDDEMVQLGISQKTGQRMGHMSIDGPEGTIAAFAPLNVARKIFIHLNTTNPVLNTQSPEFATARASGWEVAHDGLEIAL.

Belongs to the PqqB family.

It functions in the pathway cofactor biosynthesis; pyrroloquinoline quinone biosynthesis. In terms of biological role, may be involved in the transport of PQQ or its precursor to the periplasm. This Xanthomonas oryzae pv. oryzae (strain MAFF 311018) protein is Coenzyme PQQ synthesis protein B.